The sequence spans 390 residues: Carbamoyl phosphate synthase small chain (390 aa).

The segment at Met1–Glu198 is CPSase. Residues Ser53, Gly250, and Gly252 each coordinate L-glutamine. In terms of domain architecture, Glutamine amidotransferase type-1 spans Arg202 to Ala390. Cys279 functions as the Nucleophile in the catalytic mechanism. Leu280, Gln283, Asn321, Gly323, and Phe324 together coordinate L-glutamine. Catalysis depends on residues His363 and Glu365.

This sequence belongs to the CarA family. In terms of assembly, composed of two chains; the small (or glutamine) chain promotes the hydrolysis of glutamine to ammonia, which is used by the large (or ammonia) chain to synthesize carbamoyl phosphate. Tetramer of heterodimers (alpha,beta)4.

The catalysed reaction is hydrogencarbonate + L-glutamine + 2 ATP + H2O = carbamoyl phosphate + L-glutamate + 2 ADP + phosphate + 2 H(+). It catalyses the reaction L-glutamine + H2O = L-glutamate + NH4(+). It participates in amino-acid biosynthesis; L-arginine biosynthesis; carbamoyl phosphate from bicarbonate: step 1/1. Its pathway is pyrimidine metabolism; UMP biosynthesis via de novo pathway; (S)-dihydroorotate from bicarbonate: step 1/3. Functionally, small subunit of the glutamine-dependent carbamoyl phosphate synthetase (CPSase). CPSase catalyzes the formation of carbamoyl phosphate from the ammonia moiety of glutamine, carbonate, and phosphate donated by ATP, constituting the first step of 2 biosynthetic pathways, one leading to arginine and/or urea and the other to pyrimidine nucleotides. The small subunit (glutamine amidotransferase) binds and cleaves glutamine to supply the large subunit with the substrate ammonia. This chain is Carbamoyl phosphate synthase small chain, found in Maricaulis maris (strain MCS10) (Caulobacter maris).